A 369-amino-acid polypeptide reads, in one-letter code: Chorismate synthase (369 aa).

2 residues coordinate NADP(+): R48 and R54. FMN-binding positions include R125–S127, N238–A239, G278, K293–S297, and R319.

This sequence belongs to the chorismate synthase family. Homotetramer. FMNH2 serves as cofactor.

It catalyses the reaction 5-O-(1-carboxyvinyl)-3-phosphoshikimate = chorismate + phosphate. Its pathway is metabolic intermediate biosynthesis; chorismate biosynthesis; chorismate from D-erythrose 4-phosphate and phosphoenolpyruvate: step 7/7. Its function is as follows. Catalyzes the anti-1,4-elimination of the C-3 phosphate and the C-6 proR hydrogen from 5-enolpyruvylshikimate-3-phosphate (EPSP) to yield chorismate, which is the branch point compound that serves as the starting substrate for the three terminal pathways of aromatic amino acid biosynthesis. This reaction introduces a second double bond into the aromatic ring system. The sequence is that of Chorismate synthase from Burkholderia pseudomallei (strain 1106a).